The sequence spans 246 residues: MYQVSGQRPSGCDAPYGAPSAAPGPAQTLSLLPGLEVVTGSTHPAEAAPEEGSLEEAATPMPQGNGPGIPQGLDSTDLDVPTEAVTCQPQGNPLGCTPLLPNDSGHPSELGGTRRAGNGALGGPKAHRKLQTHPSLASQGSKKSKSSSKSTTSQIPLQAQEDCCVHCILSCLFCEFLTLCNIVLDCATCGSCSSEDSCLCCCCCGSGECADCDLPCDLDCGILDACCESADCLEICMECCGLCFSS.

Disordered regions lie at residues 1–76 and 91–151; these read MYQV…LDST and GNPL…SKST. Residues 14–26 show a composition bias toward low complexity; sequence APYGAPSAAPGPA. Residues 99-246 enclose the MDFI domain; it reads LLPNDSGHPS…MECCGLCFSS (148 aa).

This sequence belongs to the MDFI family. Interacts (via C-terminus) with AXIN1 and LEF1. Interacts with CCNT2. Interacts (via C-terminus) with Piezo channel composed of PIEZO1 or PIEZO2; the interaction prolongs Piezo channel inactivation.

Its subcellular location is the nucleus. It localises to the cytoplasm. In terms of biological role, inhibits the transactivation activity of the Myod family of myogenic factors and represses myogenesis. Acts by associating with Myod family members and retaining them in the cytoplasm by masking their nuclear localization signals. Can also interfere with the DNA-binding activity of Myod family members. Plays an important role in trophoblast and chondrogenic differentiation. Regulates the transcriptional activity of TCF7L1/TCF3 by interacting directly with TCF7L1/TCF3 and preventing it from binding DNA. Binds to the axin complex, resulting in an increase in the level of free beta-catenin. Affects axin regulation of the WNT and JNK signaling pathways. Regulates the activity of mechanosensitive Piezo channel. In Homo sapiens (Human), this protein is MyoD family inhibitor (MDFI).